We begin with the raw amino-acid sequence, 661 residues long: Bifunctional polymyxin resistance protein ArnA (661 aa).

The formyltransferase ArnAFT stretch occupies residues 1–304; it reads MKAVVFAYHD…ALGLVSGAVI (304 aa). The Proton donor; for formyltransferase activity role is filled by His104. (6R)-10-formyltetrahydrofolate contacts are provided by residues Arg114 and 136-140; that span reads VNRAD. Residues 314-661 form a dehydrogenase ArnADH region; that stretch reads RRTRVLILGV…TVELVDDKNP (348 aa). Residues Asp347 and 368–369 each bind NAD(+); that span reads DI. Residues Ala393, Tyr398, and 432-433 contribute to the UDP-alpha-D-glucuronate site; that span reads TS. Glu434 acts as the Proton acceptor; for decarboxylase activity in catalysis. UDP-alpha-D-glucuronate contacts are provided by residues Arg460, Asn492, 526–535, and Tyr613; that span reads KLIEGGKQKR. Arg619 acts as the Proton donor; for decarboxylase activity in catalysis.

The protein in the N-terminal section; belongs to the Fmt family. UDP-L-Ara4N formyltransferase subfamily. It in the C-terminal section; belongs to the NAD(P)-dependent epimerase/dehydratase family. UDP-glucuronic acid decarboxylase subfamily. In terms of assembly, homohexamer, formed by a dimer of trimers.

The enzyme catalyses UDP-alpha-D-glucuronate + NAD(+) = UDP-beta-L-threo-pentopyranos-4-ulose + CO2 + NADH. It catalyses the reaction UDP-4-amino-4-deoxy-beta-L-arabinose + (6R)-10-formyltetrahydrofolate = UDP-4-deoxy-4-formamido-beta-L-arabinose + (6S)-5,6,7,8-tetrahydrofolate + H(+). The protein operates within nucleotide-sugar biosynthesis; UDP-4-deoxy-4-formamido-beta-L-arabinose biosynthesis; UDP-4-deoxy-4-formamido-beta-L-arabinose from UDP-alpha-D-glucuronate: step 1/3. Its pathway is nucleotide-sugar biosynthesis; UDP-4-deoxy-4-formamido-beta-L-arabinose biosynthesis; UDP-4-deoxy-4-formamido-beta-L-arabinose from UDP-alpha-D-glucuronate: step 3/3. It participates in bacterial outer membrane biogenesis; lipopolysaccharide biosynthesis. Functionally, bifunctional enzyme that catalyzes the oxidative decarboxylation of UDP-glucuronic acid (UDP-GlcUA) to UDP-4-keto-arabinose (UDP-Ara4O) and the addition of a formyl group to UDP-4-amino-4-deoxy-L-arabinose (UDP-L-Ara4N) to form UDP-L-4-formamido-arabinose (UDP-L-Ara4FN). The modified arabinose is attached to lipid A and is required for resistance to polymyxin and cationic antimicrobial peptides. The polypeptide is Bifunctional polymyxin resistance protein ArnA (Klebsiella pneumoniae subsp. pneumoniae (strain ATCC 700721 / MGH 78578)).